We begin with the raw amino-acid sequence, 963 residues long: Ubiquitin carboxyl-terminal hydrolase 4 (963 aa).

Residues 11 to 122 (PDAETQKSEL…GQQPIVRKVV (112 aa)) form the DUSP domain. The tract at residues 27–216 (TLQRGAQWYL…LYQGQVLVIE (190 aa)) is necessary for interaction with SART3. The Nuclear export signal motif lies at 133-141 (VEVYLLELK). One can recognise a Ubiquitin-like 1 domain in the interval 142-226 (LCENSDPTNV…PQNEDGTWPR (85 aa)). The tract at residues 219-277 (NEDGTWPRQTQQSKSSTAPSRNFTTSPKSSASPYSSVSASPIANGDSTNTSGMHSSGVS) is disordered. Residues 225 to 243 (PRQTQQSKSSTAPSRNFTT) show a composition bias toward polar residues. Positions 229-295 (QQSKSSTAPS…SYNCQESPLT (67 aa)) are required for USP4 activation by providing conformational flexibility between the DUSP and catalytic domains. Residues 244-261 (SPKSSASPYSSVSASPIA) show a composition bias toward low complexity. The region spanning 302 to 923 (CGLGNLGNTC…AAYVLFYQRR (622 aa)) is the USP domain. C311 functions as the Nucleophile in the catalytic mechanism. Residues 384 to 386 (PQF) are regulates ubiquitin dissociation. The interval 405 to 407 (LHE) is necessary for interaction with RBL2. Position 445 is a phosphoserine (S445). Residues 459-463 (LVCPE) are necessary for interaction with RB1 and RBL2. Residues C461 and C464 each coordinate Zn(2+). The region spanning 483–571 (LKKDRVMEIF…IFVYEVCSTS (89 aa)) is the Ubiquitin-like 2 domain. The tract at residues 485 to 775 (KDRVMEIFLV…LQPQKKKKTA (291 aa)) is interacts with DUSP and ubiquitin-like 1 domains and is required for USP4 activation. The tract at residues 634–701 (PLPDESGSSP…ATQKKNKGRP (68 aa)) is disordered. A phosphoserine mark is found at S675 and S680. Positions 767 to 772 (QPQKKK) match the Nuclear localization signal motif. The Zn(2+) site is built by C799 and C802. Residue H881 is the Proton acceptor of the active site. The segment at 930–963 (TPSLSFPGSSDGGARPSSSQQGTGDDETYSMDTN) is disordered. A compositionally biased stretch (acidic residues) spans 953–963 (GDDETYSMDTN).

It belongs to the peptidase C19 family. USP4 subfamily. Interacts with RB1 (both dephosphorylated and hypophosphorylated forms). Interacts with RBL1 and RBL2. Interacts with ADORA2A (via cytoplasmic C-terminus); the interaction is direct. Interacts with SART3; recruits USP4 to its substrate PRPF3. In terms of processing, phosphorylated at Ser-445 by PKB/AKT1 in response to EGF stimulus, promoting its ability deubiquitinate RHEB. Monoubiquitinated by TRIM21. Ubiquitination does not lead to its proteasomal degradation. Autodeubiquitinated.

The protein resides in the cytoplasm. Its subcellular location is the nucleus. The catalysed reaction is Thiol-dependent hydrolysis of ester, thioester, amide, peptide and isopeptide bonds formed by the C-terminal Gly of ubiquitin (a 76-residue protein attached to proteins as an intracellular targeting signal).. Its activity is regulated as follows. The completion of the deubiquitinase reaction is mediated by the DUSP and ubiquitin-like 1 domains which promotes the release of ubiquitin from the catalytic site enabling subsequent reactions to occur. Its function is as follows. Deubiquitinating enzyme that removes conjugated ubiquitin from target proteins. Deubiquitinates PDPK1. Deubiquitinates TRIM21. Deubiquitinates receptor ADORA2A which increases the amount of functional receptor at the cell surface. Deubiquitinates HAS2. Deubiquitinates RHEB in response to EGF signaling, promoting mTORC1 signaling. May regulate mRNA splicing through deubiquitination of the U4 spliceosomal protein PRPF3. This may prevent its recognition by the U5 component PRPF8 thereby destabilizing interactions within the U4/U6.U5 snRNP. May also play a role in the regulation of quality control in the ER. This is Ubiquitin carboxyl-terminal hydrolase 4 (USP4) from Bos taurus (Bovine).